The sequence spans 695 residues: MDLHSLLELGTKPTAPHVRNKKVILFDTNHQVSICNQIIDAINSGIDLGDLLEGGLLTLCVEHYYNSDKDKFNTSPIAKYLRDAGYEFDVVKNADATRFLDVIPNEPHYSPLILALKTLESTESQRGRIGLFLSFCSLFLPKLVVGDRASIEKALRQVTVHQEQGIVTYPNHWLTTGHMKVIFGILRSSFILKFVLIHQGVNLVTGHDAYDSIISNSVGQTRFSGLLIVKTVLEFILQKTDSGVTLHPLVRTSKVKNEVASFKQALSNLARHGEYAPFARVLNLSGINNLEHGLYPQLSAIALGVATAHGSTLAGVNVGEQYQQLREAAHDAEIKLQRRHEHQEIQAIAEDDEERKILEQFHLQKTEITHSQTLAVLSQKREKLARLAAEIENNIVEDQGFKQSQNQVSQSFLNDPTPVEVTVQARPINRPTALPPPVDNKIEHESTEDSSSSSSFVDLNDPFALLNEDEDTLDDSVMIPSTTSREFQGIPAPPRQSQDLNNSQGKQEDESTNPIKKQFLRYQELPPVQEDDESEYTTDSQESIDQPGSDNEQGVDLPPPPLYAQEKRQDPIQHPAVSSQDPFGSIGDVNGDILEPIRSPSSPSAPQEDTRAREAYELSPDFTNYEDNQQNWPQRVVTKKGRTFLYPNDLLQTNPPESLITALVEEYQNPVSAKELQADWPDMSFDERRHVAMNL.

2 coiled-coil regions span residues 316-341 and 372-399; these read VNVG…RRHE and QTLA…VEDQ. Disordered regions lie at residues 423–458, 483–515, and 527–612; these read VQAR…SFVD, TSRE…TNPI, and PVQE…DTRA. Polar residues-rich tracts occupy residues 495–505 and 537–552; these read RQSQDLNNSQG and TTDS…SDNE. Residues 603 to 606 carry the PTAP/PSAP motif motif; the sequence is PSAP.

Belongs to the filoviruses nucleoprotein family. In terms of assembly, homooligomer. Homomultimerizes to form the nucleocapsid. Binds to viral genomic RNA. Interacts with VP35 and VP30 to form the nucleocapsid. Also interacts with VP24 and VP40. In terms of processing, phosphorylated.

It is found in the virion. The protein resides in the host cytoplasm. Encapsidates the genome, protecting it from nucleases. The encapsidated genomic RNA is termed the nucleocapsid and serves as template for transcription and replication. During replication, encapsidation by NP is coupled to RNA synthesis and all replicative products are resistant to nucleases. The sequence is that of Nucleoprotein (NP) from Chlorocebus aethiops (Green monkey).